A 230-amino-acid chain; its full sequence is Phosphoglycolate phosphatase (230 aa).

Catalysis depends on aspartate 9, which acts as the Nucleophile. Aspartate 9, aspartate 11, and aspartate 175 together coordinate Mg(2+).

The protein belongs to the HAD-like hydrolase superfamily. CbbY/CbbZ/Gph/YieH family. It depends on Mg(2+) as a cofactor.

It carries out the reaction 2-phosphoglycolate + H2O = glycolate + phosphate. The protein operates within organic acid metabolism; glycolate biosynthesis; glycolate from 2-phosphoglycolate: step 1/1. Specifically catalyzes the dephosphorylation of 2-phosphoglycolate. Is involved in the dissimilation of the intracellular 2-phosphoglycolate formed during the DNA repair of 3'-phosphoglycolate ends, a major class of DNA lesions induced by oxidative stress. This Psychrobacter arcticus (strain DSM 17307 / VKM B-2377 / 273-4) protein is Phosphoglycolate phosphatase.